The primary structure comprises 494 residues: Trigger factor (494 aa).

Positions 169-254 (GDRITMDYVG…VKEVAAPADV (86 aa)) constitute a PPIase FKBP-type domain. Positions 441–494 (LAEEEGEAKAETKKAAPKKKAAAKAEAADAGEGEEAAPKKKAAPKKKAADESAE) are disordered.

The protein belongs to the FKBP-type PPIase family. Tig subfamily.

Its subcellular location is the cytoplasm. The enzyme catalyses [protein]-peptidylproline (omega=180) = [protein]-peptidylproline (omega=0). Its function is as follows. Involved in protein export. Acts as a chaperone by maintaining the newly synthesized protein in an open conformation. Functions as a peptidyl-prolyl cis-trans isomerase. The sequence is that of Trigger factor from Rhizobium johnstonii (strain DSM 114642 / LMG 32736 / 3841) (Rhizobium leguminosarum bv. viciae).